The following is a 374-amino-acid chain: Probable neutral protease 2 homolog TRV_05367 (374 aa).

Residues 1 to 19 form the signal peptide; it reads MQVIVALAALGSLAAPALG. Positions 20–189 are excised as a propeptide; sequence FSIPRGVPVS…RGPLTRINKR (170 aa). 2 disulfide bridges follow: Cys197–Cys267 and Cys274–Cys292. A Zn(2+)-binding site is contributed by His317. The active site involves Glu318. The Zn(2+) site is built by His321 and Asp332.

It belongs to the peptidase M35 family. It depends on Zn(2+) as a cofactor.

The protein localises to the secreted. The catalysed reaction is Preferential cleavage of bonds with hydrophobic residues in P1'. Also 3-Asn-|-Gln-4 and 8-Gly-|-Ser-9 bonds in insulin B chain.. Its function is as follows. Probable secreted metalloprotease that shows high activities on basic nuclear substrates such as histone and protamine. May be involved in virulence. The polypeptide is Probable neutral protease 2 homolog TRV_05367 (Trichophyton verrucosum (strain HKI 0517)).